Here is a 131-residue protein sequence, read N- to C-terminus: D-ribose pyranase (131 aa).

H20 (proton donor) is an active-site residue. Substrate-binding positions include D28, H98, and 120-122 (YSN).

Belongs to the RbsD / FucU family. RbsD subfamily. As to quaternary structure, homodecamer.

It localises to the cytoplasm. The enzyme catalyses beta-D-ribopyranose = beta-D-ribofuranose. The protein operates within carbohydrate metabolism; D-ribose degradation; D-ribose 5-phosphate from beta-D-ribopyranose: step 1/2. In terms of biological role, catalyzes the interconversion of beta-pyran and beta-furan forms of D-ribose. In Pediococcus pentosaceus (strain ATCC 25745 / CCUG 21536 / LMG 10740 / 183-1w), this protein is D-ribose pyranase.